A 147-amino-acid chain; its full sequence is MITRMQIRIQRTHPQAILPTYAHGPAEDAGMDLHAVEDVTLEPGVARLVSTGLTLEVPPGFEAQVRPRSGLALKHAITIPNAPGTIDPGYRGEVRVIMLNLGRDAYTVHAGDRIAQMIVTRYEAVEWLEGSLADSTRGAGGFGSSGR.

Substrate is bound by residues 68-70 (RSG), N81, and 85-87 (TID).

Belongs to the dUTPase family. Requires Mg(2+) as cofactor.

It catalyses the reaction dUTP + H2O = dUMP + diphosphate + H(+). It functions in the pathway pyrimidine metabolism; dUMP biosynthesis; dUMP from dCTP (dUTP route): step 2/2. Functionally, this enzyme is involved in nucleotide metabolism: it produces dUMP, the immediate precursor of thymidine nucleotides and it decreases the intracellular concentration of dUTP so that uracil cannot be incorporated into DNA. In Solibacter usitatus (strain Ellin6076), this protein is Deoxyuridine 5'-triphosphate nucleotidohydrolase.